Here is a 477-residue protein sequence, read N- to C-terminus: UDP-glycosyltransferase 71K1 (477 aa).

UDP-alpha-D-glucose-binding positions include S285, 350–351 (WA), 368–376 (HCGWNSILE), and 390–393 (YAEQ).

It belongs to the UDP-glycosyltransferase family.

Functionally, glycosyltransferase that possesses chalcone and flavonol 2'-O-glycosyltransferase activity. Converts phloretin to phlorizin (phloretin 2'-O-glucoside), a potent antioxidant. Possesses glycosyltransferase activity toward quercetin, isoliquiritigenin, butein and caffeic acid. The sequence is that of UDP-glycosyltransferase 71K1 from Malus domestica (Apple).